Reading from the N-terminus, the 899-residue chain is Toll-like receptor 4 (899 aa).

A signal peptide spans 1–46 (MCPLQIHVLHLIQGNQKNRKGKYVNMTRQLWYILPLLFLLCHCVTS). N-linked (GlcNAc...) asparagine glycans are attached at residues Asn-25, Asn-75, Asn-83, and Asn-93. The Extracellular segment spans residues 47-702 (ERRCYFSKIS…LERNCRSYTA (656 aa)). 7 LRR repeats span residues 83 to 103 (NESVVQIDLSNNSINVFPDLP), 104 to 126 (RSLLVLDISRNPLKQFQKNAFAR), 128 to 150 (QNLTTLSIVNNTYGLQPSNLTAG), 155 to 179 (LTRLTYLDLRGSWNGTAYPEEVLSD), 181 to 202 (VSLNALRINGKQKGFGVLMRKI), 203 to 229 (HALKRLDISGSEGDCKIDCLHAGYFQN), and 230 to 253 (VHGIQELNVSNCHLTNILEGTFSY). 4 N-linked (GlcNAc...) asparagine glycosylation sites follow: Asn-129, Asn-137, Asn-146, and Asn-168. N-linked (GlcNAc...) asparagine glycosylation is found at Asn-237, Asn-256, Asn-275, and Asn-313. 4 LRR repeats span residues 257–282 (LTHLDISYNEELSFNILRNISKDLKN), 313–336 (NTSLRELHANSNRLETIQSGVLMY), 338–360 (PKTLQHASVSDNKLTMGMYALET), and 363–386 (LVNLKTYDMSLQFKSHDPRDIFSN). N-linked (GlcNAc...) asparagine glycosylation is found at Asn-388, Asn-432, and Asn-463. LRR repeat units lie at residues 468–493 (HYPLLKYRIGNNKIKEIYAQDNVFYD), 501–524 (LEGLEILDLSNNFCTNLSTFFFDY), 526–549 (TGLKSVKLNHNILGFSLAKDEKGE), 554–577 (LLKLKHLEIKYNRIQVLPKKILRN), 579–601 (ISLETLDLADNWLRKFKVDLKHI), 602–624 (KGLRHIDLSNNQISELPPGVMRE), and 631–654 (SSNLTVNLTGNSLLCNCENEHFLR). N-linked (GlcNAc...) asparagine glycosylation occurs at Asn-516. N-linked (GlcNAc...) asparagine glycans are attached at residues Asn-633, Asn-637, and Asn-668. The chain crosses the membrane as a helical span at residues 703–723 (VIVLFSCVFVILLTVIVCGVV). The Cytoplasmic segment spans residues 724-899 (YRYRWKLRYL…WRKLRDPISM (176 aa)). Residues 756-897 (YEFDAFISYA…IFWRKLRDPI (142 aa)) enclose the TIR domain.

Belongs to the Toll-like receptor family. Expressed in all tissues tested. The highest expression is in the hepatopancreas, with moderate expression in the gills, and low expression in the gonads, adductor muscle, hemocytes, and mantle.

The protein resides in the cell membrane. In terms of biological role, may be involved in the innate immune response. The protein is Toll-like receptor 4 of Pinctada imbricata (Atlantic pearl-oyster).